Here is a 109-residue protein sequence, read N- to C-terminus: Small ribosomal subunit protein bS20 (109 aa).

The interval 1–26 (MANIKSAKKRAIQSEKRRKHNASRRS) is disordered.

It belongs to the bacterial ribosomal protein bS20 family.

Functionally, binds directly to 16S ribosomal RNA. In Hamiltonella defensa subsp. Acyrthosiphon pisum (strain 5AT), this protein is Small ribosomal subunit protein bS20.